The chain runs to 67 residues: UPF0435 protein SSP0913 (67 aa).

The protein belongs to the UPF0435 family.

This Staphylococcus saprophyticus subsp. saprophyticus (strain ATCC 15305 / DSM 20229 / NCIMB 8711 / NCTC 7292 / S-41) protein is UPF0435 protein SSP0913.